Consider the following 240-residue polypeptide: tRNA pseudouridine synthase B (240 aa).

The active-site Nucleophile is Asp-54.

It belongs to the pseudouridine synthase TruB family. Type 1 subfamily.

The catalysed reaction is uridine(55) in tRNA = pseudouridine(55) in tRNA. Its function is as follows. Responsible for synthesis of pseudouridine from uracil-55 in the psi GC loop of transfer RNAs. This Chlorobium phaeovibrioides (strain DSM 265 / 1930) (Prosthecochloris vibrioformis (strain DSM 265)) protein is tRNA pseudouridine synthase B.